A 132-amino-acid chain; its full sequence is MDKVKVEAPVRATEDPEKVGEAVLNVFPELEIEVEDDAVRGTGDSGSLRNLQEVLEKRRIRLTARNILKKHLRDNSTWFYINKQAALMNRVNVLEESISALGDILVEIESDDIMGLIDWLAPDVSVPEDVAD.

Belongs to the UPF0201 family.

This is UPF0201 protein MTH_433 from Methanothermobacter thermautotrophicus (strain ATCC 29096 / DSM 1053 / JCM 10044 / NBRC 100330 / Delta H) (Methanobacterium thermoautotrophicum).